The following is a 499-amino-acid chain: Glutathione reductase, cytosolic (499 aa).

Residues Ser35, Gly36, Glu55, Thr72, Cys73, and Lys81 each contribute to the FAD site. Ser35 serves as a coordination point for glutathione. An intrachain disulfide couples Cys73 to Cys78. Residue Tyr130 participates in glutathione binding. Gly146 provides a ligand contact to FAD. Residues Gly211, Ile214, Glu217, Arg234, Arg240, and Gly297 each contribute to the NADP(+) site. 2 residues coordinate FAD: Asp338 and Thr346. Ala376 lines the NADP(+) pocket. Residue His472 participates in FAD binding. The active-site Proton acceptor is the His472.

Belongs to the class-I pyridine nucleotide-disulfide oxidoreductase family. As to quaternary structure, homodimer. The cofactor is FAD.

It localises to the cytoplasm. It carries out the reaction 2 glutathione + NADP(+) = glutathione disulfide + NADPH + H(+). Catalyzes the reduction of glutathione disulfide (GSSG) to reduced glutathione (GSH). Constitutes the major mechanism to maintain a high GSH:GSSG ratio in the cytosol. In Arabidopsis thaliana (Mouse-ear cress), this protein is Glutathione reductase, cytosolic.